A 199-amino-acid chain; its full sequence is Guanylate kinase (199 aa).

The Guanylate kinase-like domain maps to 19-198; the sequence is VTVAVVSGPT…AVAHLVELLS (180 aa). 26–33 contacts ATP; it reads GPTAVGKG.

This sequence belongs to the guanylate kinase family.

The protein resides in the cytoplasm. It catalyses the reaction GMP + ATP = GDP + ADP. Its function is as follows. Essential for recycling GMP and indirectly, cGMP. The protein is Guanylate kinase of Cutibacterium acnes (strain DSM 16379 / KPA171202) (Propionibacterium acnes).